A 294-amino-acid polypeptide reads, in one-letter code: Protein farnesyltransferase/geranylgeranyltransferase type-1 subunit alpha (294 aa).

5 PFTA repeats span residues 57–91 (YSLRALNLTGFLIMNNPAHYTVWAYRFQILNHTPS), 92–125 (YIDNELEWLDEIAEDFQKNYQVWHHRQKILSLTK), 126–160 (NYERELEFTKKMFEIDSKNYHVWSYRVWILQNFND), 161–194 (YSQELKLTNELLEKDIYNNSAWNHRFYVLFETSK), and 199–233 (SLEEELNYLKDKILFAPDNQSAWNYLCGVLDKSGP).

This sequence belongs to the protein prenyltransferase subunit alpha family. As to quaternary structure, heterodimer of an alpha(cwp1) and a beta(cpp1 or cwg2) subunit. The cofactor is Mg(2+).

It carries out the reaction L-cysteinyl-[protein] + (2E,6E)-farnesyl diphosphate = S-(2E,6E)-farnesyl-L-cysteinyl-[protein] + diphosphate. The enzyme catalyses geranylgeranyl diphosphate + L-cysteinyl-[protein] = S-geranylgeranyl-L-cysteinyl-[protein] + diphosphate. Catalyzes the transfer of a farnesyl or geranyl-geranyl moiety from farnesyl or geranyl-geranyl diphosphate to a cysteine at the fourth position from the C-terminus of several proteins having the C-terminal sequence Cys-aliphatic-aliphatic-X. The alpha(cwp1) subunit is thought to participate in a stable complex with the substrate. The beta(cpp1 or cwg2) subunits bind the peptide substrate. This Schizosaccharomyces pombe (strain 972 / ATCC 24843) (Fission yeast) protein is Protein farnesyltransferase/geranylgeranyltransferase type-1 subunit alpha (cwp1).